A 562-amino-acid polypeptide reads, in one-letter code: Valerena-4,7(11)-diene synthase (562 aa).

Residues Asp314, Asp318, and Glu467 each coordinate Mg(2+). A DDXXD motif motif is present at residues 314-318 (DDTYD).

It belongs to the terpene synthase family. The cofactor is Mg(2+). In terms of tissue distribution, predominantly expressed in root.

It catalyses the reaction (2E,6E)-farnesyl diphosphate = valerena-4,7(11)-diene + diphosphate. In terms of biological role, catalyzes formation of valerena-4,7(11)-diene, one of the active ingredients responsible for the sedative effect extracted from Valeriana officinalis root. The sequence is that of Valerena-4,7(11)-diene synthase (TPS2) from Valeriana officinalis (Valerian).